A 315-amino-acid chain; its full sequence is Methionyl-tRNA formyltransferase (315 aa).

113–116 is a binding site for (6S)-5,6,7,8-tetrahydrofolate; that stretch reads SILP.

This sequence belongs to the Fmt family.

The enzyme catalyses L-methionyl-tRNA(fMet) + (6R)-10-formyltetrahydrofolate = N-formyl-L-methionyl-tRNA(fMet) + (6S)-5,6,7,8-tetrahydrofolate + H(+). Functionally, attaches a formyl group to the free amino group of methionyl-tRNA(fMet). The formyl group appears to play a dual role in the initiator identity of N-formylmethionyl-tRNA by promoting its recognition by IF2 and preventing the misappropriation of this tRNA by the elongation apparatus. This is Methionyl-tRNA formyltransferase from Vibrio vulnificus (strain CMCP6).